We begin with the raw amino-acid sequence, 184 residues long: mRNA transport regulator MTR2 (184 aa).

Residues 111–135 (KMGQDATVPIQPNNTGNRNRPNDMN) are disordered. A compositionally biased stretch (polar residues) spans 120–129 (IQPNNTGNRN). Thr-125 carries the post-translational modification Phosphothreonine.

As to quaternary structure, interacts with MEX67.

The protein localises to the nucleus. In terms of biological role, affects mRNA transport from the nucleus to the cytoplasm. The chain is mRNA transport regulator MTR2 (MTR2) from Saccharomyces cerevisiae (strain ATCC 204508 / S288c) (Baker's yeast).